A 286-amino-acid polypeptide reads, in one-letter code: Probable aquaporin-3 (286 aa).

The segment at 1 to 34 is disordered; the sequence is MADTYGMNGHNGHVKDRRSSSMNGRNRLYAQQEP. Topologically, residues 1-52 are cytoplasmic; that stretch reads MADTYGMNGHNGHVKDRRSSSMNGRNRLYAQQEPQRTTHLSEFGKHMVAASG. The chain crosses the membrane as a helical span at residues 53-73; that stretch reads EFVGTFLFLYFGYAGNIVAVL. Residues 74-87 are Extracellular-facing; it reads QEPISGPNGTLANN. Asn81 and Asn86 each carry an N-linked (GlcNAc...) asparagine glycan. A helical transmembrane segment spans residues 88-108; it reads TVMYIAMAYGFSLLVNVWTFY. Over 109–135 the chain is Cytoplasmic; that stretch reads RISGGLFNPAVTFGLCLSGQLPWIRAL. The NPA 1 motif lies at 116-118; that stretch reads NPA. Residues 136 to 156 form a helical membrane-spanning segment; sequence FLFPSQIIAAMCAGGLVNAMF. Residues 157-175 lie on the Extracellular side of the membrane; that stretch reads PGSASIANTTLGPNTSIAQ. N-linked (GlcNAc...) asparagine glycans are attached at residues Asn164 and Asn170. Residues 176 to 196 form a helical membrane-spanning segment; it reads GVFLEMFFTAQLVFVVLMLAA. The Cytoplasmic segment spans residues 197–202; the sequence is EKSRDT. The helical transmembrane segment at 203–223 threads the bilayer; that stretch reads FLAPVGIGLALFVALIPGVFV. Residues 224-244 are Extracellular-facing; the sequence is TGGSANPVRSFGCAVGSRDFP. Positions 229 to 231 match the NPA 2 motif; the sequence is NPV. The chain crosses the membrane as a helical span at residues 245-265; that stretch reads GYHWIYWVGPLLGAALAAGYF. Residues 266 to 286 are Cytoplasmic-facing; the sequence is RLVKMMHYEEANPGQDSPVDV.

This sequence belongs to the MIP/aquaporin (TC 1.A.8) family.

It is found in the membrane. It carries out the reaction H2O(in) = H2O(out). Its function is as follows. Probable water channel that may have redundant functions with FgAQP5. The protein is Probable aquaporin-3 of Gibberella zeae (strain ATCC MYA-4620 / CBS 123657 / FGSC 9075 / NRRL 31084 / PH-1) (Wheat head blight fungus).